The chain runs to 251 residues: MRRKIVAGNWKLHGTRAFATELVAQVAAHMPLAGVDVVILPPLPYLGDLIEDFEAHHLAFGAQDVSSNEKGAYTGEVSASMLVDVGAEYGLVGHSERRQYHQESSELVARKFAAAMHAGLIPVLCVGESLEQREAGQTEAILRAQLEPVLSLVGSAGFARAVVAYEPIWAIGTGRTATPDQAQAVHAFIRGEVAKADARIADSLPILYGGSVKPDNASELFSQPDVDGGLVGGASLVAEDFLAIARAAAAC.

Substrate is bound at residue 9-11; sequence NWK. His94 acts as the Electrophile in catalysis. The active-site Proton acceptor is the Glu166. Substrate contacts are provided by residues Gly172, Ser211, and 232–233; that span reads GG.

This sequence belongs to the triosephosphate isomerase family. As to quaternary structure, homodimer.

Its subcellular location is the cytoplasm. It catalyses the reaction D-glyceraldehyde 3-phosphate = dihydroxyacetone phosphate. It participates in carbohydrate biosynthesis; gluconeogenesis. The protein operates within carbohydrate degradation; glycolysis; D-glyceraldehyde 3-phosphate from glycerone phosphate: step 1/1. Functionally, involved in the gluconeogenesis. Catalyzes stereospecifically the conversion of dihydroxyacetone phosphate (DHAP) to D-glyceraldehyde-3-phosphate (G3P). The protein is Triosephosphate isomerase of Xanthomonas campestris pv. campestris (strain 8004).